The sequence spans 432 residues: Ribosomal protein uS12 methylthiotransferase RimO (432 aa).

One can recognise an MTTase N-terminal domain in the interval 2–115 (IRVAVITLGC…LPEIINRVLK (114 aa)). 6 residues coordinate [4Fe-4S] cluster: Cys11, Cys47, Cys78, Cys151, Cys155, and Cys158. Residues 137–367 (EDGKPFAYLK…MLHQQSITRA (231 aa)) enclose the Radical SAM core domain.

It belongs to the methylthiotransferase family. RimO subfamily. [4Fe-4S] cluster is required as a cofactor.

Its subcellular location is the cytoplasm. The enzyme catalyses L-aspartate(89)-[ribosomal protein uS12]-hydrogen + (sulfur carrier)-SH + AH2 + 2 S-adenosyl-L-methionine = 3-methylsulfanyl-L-aspartate(89)-[ribosomal protein uS12]-hydrogen + (sulfur carrier)-H + 5'-deoxyadenosine + L-methionine + A + S-adenosyl-L-homocysteine + 2 H(+). In terms of biological role, catalyzes the methylthiolation of an aspartic acid residue of ribosomal protein uS12. This Moorella thermoacetica (strain ATCC 39073 / JCM 9320) protein is Ribosomal protein uS12 methylthiotransferase RimO.